The chain runs to 392 residues: Chalcone synthase B (392 aa).

C167 is an active-site residue.

The protein belongs to the thiolase-like superfamily. Chalcone/stilbene synthases family. As to expression, expressed at low level in seedlings after illumination with UV light. No expression in flowers or tissue culture.

It catalyses the reaction (E)-4-coumaroyl-CoA + 3 malonyl-CoA + 3 H(+) = 2',4,4',6'-tetrahydroxychalcone + 3 CO2 + 4 CoA. Its pathway is secondary metabolite biosynthesis; flavonoid biosynthesis. Functionally, the primary product of this enzyme is 4,2',4',6'-tetrahydroxychalcone (also termed naringenin-chalcone or chalcone) which can under specific conditions spontaneously isomerize into naringenin. The sequence is that of Chalcone synthase B (CHSB) from Petunia hybrida (Petunia).